Here is a 427-residue protein sequence, read N- to C-terminus: Enolase (427 aa).

Residue Q163 coordinates (2R)-2-phosphoglycerate. The active-site Proton donor is E205. Mg(2+) contacts are provided by D242, E285, and D312. Residues K337, R366, S367, and K388 each contribute to the (2R)-2-phosphoglycerate site. K337 functions as the Proton acceptor in the catalytic mechanism.

Belongs to the enolase family. Requires Mg(2+) as cofactor.

It localises to the cytoplasm. It is found in the secreted. Its subcellular location is the cell surface. It carries out the reaction (2R)-2-phosphoglycerate = phosphoenolpyruvate + H2O. The protein operates within carbohydrate degradation; glycolysis; pyruvate from D-glyceraldehyde 3-phosphate: step 4/5. Catalyzes the reversible conversion of 2-phosphoglycerate (2-PG) into phosphoenolpyruvate (PEP). It is essential for the degradation of carbohydrates via glycolysis. The sequence is that of Enolase from Ralstonia nicotianae (strain ATCC BAA-1114 / GMI1000) (Ralstonia solanacearum).